The following is a 927-amino-acid chain: MAKGKYDGTLNLPQTGFPMRANLPQREPEILKFWDEIDIYRRIQEKNAGRPQFILHDGPPYANGNIHLGHTLNKVLKDIIVKYRSMSGYDSPYIPGWDTHGLPIEQQAIKNLGIDRHKTDVVEFREHCRDYALKYVEIQKEQFKRLGVRGDWEDPYLTLSPGFESIQIKVFGEMAKKGFIYKGLKPVYWCGDCETALAEAEVEYNEKVSPSIYVKFPVKDGKGVLPEDAFVIIWTTTPWTLPANTGICLHPGFDYVLLEVKGEKYLLAQGLLEAVAGELGWDNYQILDKYKGEELERVICHHPFFARDSLLVLGEHVTLEAGTGCVHTAPGHGEDDFHVGQEYGLEVISPVDDRGRFTAEAEKFQGLYVHDANKAVIEELEKRNMLLKAASIEHQYPYCWRCKQPIIYRATEQWFASIDGFRQDALNAIDTVKWIPSWGRDRIFNMIRDRGDWCISRQRTWGVPIPIFYCESCGEALINDETIQRVSELFAANGSDIWFAKTAAELMPPGCSCEHCGGSTFRKESDIMDVWFDSGSSHMAVLEPRQELRWPSDMYLEGSDQHRGWFNSSLSTAVAIRGAAPYREVLTHGFVVDEQGRKMSKSLGNVVDPLRMTREMGADILRLWVSSADYRNDVSVSPNIIKQSAEAYRKIRNTCRFILGNLFDFDPGKERVSYDKLSELDQWALLKLDKLIRRVTKAYEDYEFHVVFHSMHNFCTVDLSNIYFDILKDKLYCSHPQDAERKAAQTVLYDIINALVVMLTPILAFSSEEIWSYLKKEGQAESVQLLEWPQANDEYLNQAIENRMSRVLELREVVTKALEEARSKKVIGHSLGAWITIYASPEWTELLKATAGLEKIFIVSRAELKPETEAPAEALALEGVEGIRVMVQAAEGSKCERCWIIENSVGEDLKHPTLCQRCAEVVAQLQG.

A 'HIGH' region motif is present at residues 60-70 (PYANGNIHLGH). L-isoleucyl-5'-AMP is bound at residue glutamate 557. The 'KMSKS' region motif lies at 598–602 (KMSKS). Residue lysine 601 participates in ATP binding. Cysteine 895, cysteine 898, cysteine 915, and cysteine 918 together coordinate Zn(2+).

It belongs to the class-I aminoacyl-tRNA synthetase family. IleS type 1 subfamily. As to quaternary structure, monomer. The cofactor is Zn(2+).

The protein resides in the cytoplasm. The enzyme catalyses tRNA(Ile) + L-isoleucine + ATP = L-isoleucyl-tRNA(Ile) + AMP + diphosphate. In terms of biological role, catalyzes the attachment of isoleucine to tRNA(Ile). As IleRS can inadvertently accommodate and process structurally similar amino acids such as valine, to avoid such errors it has two additional distinct tRNA(Ile)-dependent editing activities. One activity is designated as 'pretransfer' editing and involves the hydrolysis of activated Val-AMP. The other activity is designated 'posttransfer' editing and involves deacylation of mischarged Val-tRNA(Ile). This Syntrophomonas wolfei subsp. wolfei (strain DSM 2245B / Goettingen) protein is Isoleucine--tRNA ligase.